Consider the following 540-residue polypeptide: Probable metabolite transport protein YFL040W (540 aa).

Residues 1–29 are Cytoplasmic-facing; that stretch reads MTAMKAIVWRLPKMPKIKITKTYEVTKIT. Residues 30-50 form a helical membrane-spanning segment; it reads AILTLVGFIMGLEVPSLATFL. Over 51-67 the chain is Extracellular; that stretch reads TNKTFNEYFKYPTPLQQ. Asn-52 is a glycosylation site (N-linked (GlcNAc...) asparagine). The helical transmembrane segment at 68–88 threads the bilayer; sequence GLLMGSTPLGGIMGCFICCIM. The Cytoplasmic portion of the chain corresponds to 89 to 101; it reads NDRFSRIYQFQSG. Residues 102-122 traverse the membrane as a helical segment; sequence IIIWNIVTLLNFCIWDILGLL. Residues 123–126 lie on the Extracellular side of the membrane; the sequence is ICRM. The helical transmembrane segment at 127–147 threads the bilayer; that stretch reads IKGMILGNFSILVASYANEVI. The Cytoplasmic portion of the chain corresponds to 148-158; that stretch reads PRGKRGSTMSY. Residues 159 to 179 form a helical membrane-spanning segment; the sequence is IQLCLTIGILVMHYLCIALSL. The Extracellular segment spans residues 180–187; sequence WDSHFAFR. A helical membrane pass occupies residues 188-208; sequence IAWCIGIIPGLLFWMASYALP. Over 209–275 the chain is Cytoplasmic; that stretch reads ESYHWLVLHG…KKLPRGSFKP (67 aa). Residues 276 to 296 traverse the membrane as a helical segment; it reads LILGMTLQLLVQFSGINIILG. At 297–313 the chain is on the extracellular side; it reads YITYICEIVGLEGNVKL. A helical transmembrane segment spans residues 314 to 334; it reads FTSSIPYFINMVLSLLPITFI. Over 335 to 341 the chain is Cytoplasmic; it reads DYTSRKL. Residues 342–362 traverse the membrane as a helical segment; it reads ITLLGGFPISGLLITIGALFV. Residues 363–385 lie on the Extracellular side of the membrane; the sequence is KYGQDTKPIDGNRSLVWSIGENP. N-linked (GlcNAc...) asparagine glycosylation occurs at Asn-374. Residues 386 to 406 traverse the membrane as a helical segment; it reads FVGGWILTLCFLIVGIFAMSL. At 407 to 428 the chain is on the cytoplasmic side; it reads SSIPWVYTNEMLPSRVKVKGFA. The helical transmembrane segment at 429–449 threads the bilayer; sequence ICVTFGWLGNFILTFLCPVMI. The Extracellular portion of the chain corresponds to 450 to 455; that stretch reads ERLKGT. A helical transmembrane segment spans residues 456 to 476; it reads TFIIFGSLTFLISLSVLIWFP. Over 477–540 the chain is Cytoplasmic; sequence ETKGMSIEDI…KLKSDEEMII (64 aa). Residues 499–540 form a disordered region; it reads NLHGEKGIKTPDSNSNGGSTRSSQEGQLHKPIKLKSDEEMII. Positions 509 to 524 are enriched in polar residues; it reads PDSNSNGGSTRSSQEG.

The protein belongs to the major facilitator superfamily. Sugar transporter (TC 2.A.1.1) family.

Its subcellular location is the membrane. In Saccharomyces cerevisiae (strain ATCC 204508 / S288c) (Baker's yeast), this protein is Probable metabolite transport protein YFL040W.